A 70-amino-acid chain; its full sequence is U-scoloptoxin(20)-Sm1a (70 aa).

Positions 1–24 (MKKRSQVFCIFIAMVLLILPLSMS) are cleaved as a signal peptide.

It belongs to the scoloptoxin-20 family. Post-translationally, contains 3 disulfide bonds. As to expression, expressed by the venom gland.

It is found in the secreted. This Scolopendra morsitans (Tanzanian blue ringleg centipede) protein is U-scoloptoxin(20)-Sm1a.